Here is a 603-residue protein sequence, read N- to C-terminus: NADH-ubiquinone oxidoreductase chain 5 (603 aa).

A run of 16 helical transmembrane segments spans residues 4–24, 38–58, 89–109, 122–142, 171–191, 211–233, 241–261, 273–293, 301–320, 325–347, 366–386, 405–424, 457–477, 488–508, 537–557, and 582–602; these read FTTM…ATLI, TAIA…ICLG, FLPV…WYMA, LIFL…QLFI, AILY…WFLL, LPLL…HPWL, TPVS…FLLI, IQTL…ICAL, IVAF…IGIN, AFLH…GSII, MPLT…MPFL, NAWA…AYST, LMTG…PTSL, LAAL…NYLA, IPHL…DLTW, and GMIK…LLMI.

It belongs to the complex I subunit 5 family. In terms of assembly, core subunit of respiratory chain NADH dehydrogenase (Complex I) which is composed of 45 different subunits.

The protein localises to the mitochondrion inner membrane. The enzyme catalyses a ubiquinone + NADH + 5 H(+)(in) = a ubiquinol + NAD(+) + 4 H(+)(out). Its function is as follows. Core subunit of the mitochondrial membrane respiratory chain NADH dehydrogenase (Complex I) which catalyzes electron transfer from NADH through the respiratory chain, using ubiquinone as an electron acceptor. Essential for the catalytic activity and assembly of complex I. The chain is NADH-ubiquinone oxidoreductase chain 5 (MT-ND5) from Pongo pygmaeus (Bornean orangutan).